We begin with the raw amino-acid sequence, 295 residues long: MMRILLFLATNLAVVLIASITLSLFGFNGFMAANGVDLNLSQLLVFCAVFGFAGSLFSLFISKWMAKMSTGTQIITQPRTRHEQWLLQTVEQLSREAGIKMPEVGIFPAYEANAFATGWNKNDALVAVSQGLLERFKEDEVRAVLAHEIGHVANGDMVTLALIQGVVNTFVMFFARIIGNFVDKVIFKNEEGQGMAYYIATIFAELVLGILASAIVMWFSRKREFRADDAGARLAGTGAMINALQRLRAEQGLPVHMPDTLNAFGINGGIKQGFARMFMSHPPLEERIDALRRRG.

2 consecutive transmembrane segments (helical) span residues 4–24 (ILLFLATNLAVVLIASITLSL) and 41–61 (SQLLVFCAVFGFAGSLFSLFI). A Zn(2+)-binding site is contributed by histidine 147. Residue glutamate 148 is part of the active site. Zn(2+) is bound at residue histidine 151. Transmembrane regions (helical) follow at residues 158–178 (VTLALIQGVVNTFVMFFARII) and 199–219 (IATIFAELVLGILASAIVMWF). Residue glutamate 224 participates in Zn(2+) binding.

The protein belongs to the peptidase M48B family. The cofactor is Zn(2+).

The protein localises to the cell inner membrane. This Pseudomonas fluorescens (strain Pf0-1) protein is Protease HtpX.